A 503-amino-acid polypeptide reads, in one-letter code: Ell-associated factor Eaf (503 aa).

Composition is skewed to polar residues over residues 143 to 158 (PGQQ…TNVA) and 170 to 189 (ENST…SRRN). 2 disordered regions span residues 143–223 (PGQQ…PAWD) and 251–503 (NGSQ…EDDD). Residue Ser199 is modified to Phosphoserine. Residues 251 to 264 (NGSQANTSGSSTGS) show a composition bias toward polar residues. The segment covering 281–296 (GKQRQAPHHGHAKRQQ) has biased composition (basic residues). Residues 297 to 311 (RSSPPMVQQQPNFGR) show a composition bias toward polar residues. Residues 312–326 (NSYNGGNNYAQQQQH) are compositionally biased toward low complexity. Acidic residues predominate over residues 382–397 (DSSDSDSGSDSDDSTE). Composition is skewed to low complexity over residues 415–435 (MHHQ…QQQH) and 484–497 (NDLL…SSNS).

The protein belongs to the EAF family.

The protein localises to the nucleus. Promotes transcriptional elongation by Su(Tpl)/ELL. Essential for development. The protein is Ell-associated factor Eaf of Drosophila ananassae (Fruit fly).